The chain runs to 158 residues: 6,7-dimethyl-8-ribityllumazine synthase (158 aa).

Residues F23, 61-63 (SFE), and 85-87 (AVI) contribute to the 5-amino-6-(D-ribitylamino)uracil site. 90-91 (DT) contacts (2S)-2-hydroxy-3-oxobutyl phosphate. H93 acts as the Proton donor in catalysis. Residue F118 coordinates 5-amino-6-(D-ribitylamino)uracil. R132 lines the (2S)-2-hydroxy-3-oxobutyl phosphate pocket.

Belongs to the DMRL synthase family.

The catalysed reaction is (2S)-2-hydroxy-3-oxobutyl phosphate + 5-amino-6-(D-ribitylamino)uracil = 6,7-dimethyl-8-(1-D-ribityl)lumazine + phosphate + 2 H2O + H(+). It participates in cofactor biosynthesis; riboflavin biosynthesis; riboflavin from 2-hydroxy-3-oxobutyl phosphate and 5-amino-6-(D-ribitylamino)uracil: step 1/2. In terms of biological role, catalyzes the formation of 6,7-dimethyl-8-ribityllumazine by condensation of 5-amino-6-(D-ribitylamino)uracil with 3,4-dihydroxy-2-butanone 4-phosphate. This is the penultimate step in the biosynthesis of riboflavin. In Prochlorococcus marinus (strain NATL1A), this protein is 6,7-dimethyl-8-ribityllumazine synthase.